Reading from the N-terminus, the 44-residue chain is Protein PsbN (44 aa).

Residues 6-26 (FFFTLFLWFFLLSITIYSIYI) form a helical membrane-spanning segment.

The protein belongs to the PsbN family.

It is found in the plastid. It localises to the chloroplast thylakoid membrane. May play a role in photosystem I and II biogenesis. In Oedogonium cardiacum (Filamentous green alga), this protein is Protein PsbN.